Reading from the N-terminus, the 135-residue chain is MPTIQQLIRSGRSIKASKTASPALEKCPQKRGVCTRVYTTTPKKPNSALRKVARVRLSNKIEVTAYIPGEGHNLQEHSIVLIRGGRVKDLPGVRYHIVRGSLDTSGVADRKQSRSKYGAKQPKAGAAAPAKGKGR.

Position 89 is a 3-methylthioaspartic acid (Asp-89). The tract at residues 101–135 (SLDTSGVADRKQSRSKYGAKQPKAGAAAPAKGKGR) is disordered. The span at 118–135 (GAKQPKAGAAAPAKGKGR) shows a compositional bias: low complexity.

The protein belongs to the universal ribosomal protein uS12 family. As to quaternary structure, part of the 30S ribosomal subunit. Contacts proteins S8 and S17. May interact with IF1 in the 30S initiation complex.

Its function is as follows. With S4 and S5 plays an important role in translational accuracy. In terms of biological role, interacts with and stabilizes bases of the 16S rRNA that are involved in tRNA selection in the A site and with the mRNA backbone. Located at the interface of the 30S and 50S subunits, it traverses the body of the 30S subunit contacting proteins on the other side and probably holding the rRNA structure together. The combined cluster of proteins S8, S12 and S17 appears to hold together the shoulder and platform of the 30S subunit. The sequence is that of Small ribosomal subunit protein uS12 from Chlorobium limicola (strain DSM 245 / NBRC 103803 / 6330).